The following is a 155-amino-acid chain: UPF0260 protein R01011 (155 aa).

Belongs to the UPF0260 family.

The polypeptide is UPF0260 protein R01011 (Rhizobium meliloti (strain 1021) (Ensifer meliloti)).